The following is a 590-amino-acid chain: Keratin, type II cytoskeletal 5 (590 aa).

The segment covering 1-18 (MSRQSSVSFRSGGSRSFS) has biased composition (low complexity). Residues 1–20 (MSRQSSVSFRSGGSRSFSTA) form a disordered region. The tract at residues 1–167 (MSRQSSVSFR…DPSIQRVRTE (167 aa)) is head. Phosphoserine occurs at positions 5, 8, 16, and 21. The residue at position 24 (Thr24) is a Phosphothreonine; by CDK1. 7 positions are modified to phosphoserine: Ser26, Ser36, Ser50, Ser64, Ser71, Ser75, and Ser82. Phosphothreonine; by CDK1 is present on Thr151. Positions 168-203 (EREQIKTLNNKFASFIDKVRFLEQQNKVLDTKWTLL) are coil 1A. In terms of domain architecture, IF rod spans 168–481 (EREQIKTLNN…KLLEGEECRL (314 aa)). Residues 204–222 (QEQGTKTVRQNLEPLFEQY) are linker 1. Residues 223–315 (INNLRRQLDS…FFDAELSQMQ (93 aa)) form a coil 1B region. The interval 316–338 (THVSDTSVVLSMDNNRNLDLDSI) is linker 12. Positions 339–477 (IAEVKAQYEE…ATYRKLLEGE (139 aa)) are coil 2. The segment at 478 to 590 (ECRLSGEGVG…TSSSRKSFKS (113 aa)) is tail. The segment at 566 to 590 (GSGGGSSSSVKFVSTTSSSRKSFKS) is disordered. Residues 572-590 (SSSVKFVSTTSSSRKSFKS) are compositionally biased toward low complexity.

Belongs to the intermediate filament family. As to quaternary structure, heterodimer of a type I and a type II keratin. Heterodimer with type I keratin KRT25 leading to the formation of keratin intermediate filament (KIF) network. Forms a heterodimer (via 2B domains) with KRT14 (via 2B domains). Interacts with PLEC isoform 1C, when in a heterodimer with KRT14. Interacts with TCHP. Interacts with EPPK1. Interacts with AMELX. Interacts with PKP1 (via N-terminus) and PKP2. In terms of processing, phosphorylated by CDK1, AURKB and Rho-kinase, phosphorylation is regulated by the cell cycle. Thr-24 phosphorylation, mediated by CDK1, peaks during prometaphase or metaphase cells with phosphorylated filamentous structures evident throughout the cytoplasm during early mitosis. CDK1 phosphorylates Thr-24 in mitotic cells at the site of injury. O-glycosylated. Expressed in corneal epithelium (at protein level). Expressed in keratinocytes (at protein level).

It is found in the cytoplasm. In terms of biological role, required for the formation of keratin intermediate filaments in the basal epidermis and maintenance of the skin barrier in response to mechanical stress. Regulates the recruitment of Langerhans cells to the epidermis, potentially by modulation of the abundance of macrophage chemotactic cytokines, macrophage inflammatory cytokines and CTNND1 localization in keratinocytes. This is Keratin, type II cytoskeletal 5 (KRT5) from Homo sapiens (Human).